The chain runs to 251 residues: tRNA pseudouridine synthase A (251 aa).

Aspartate 52 acts as the Nucleophile in catalysis. Tyrosine 113 lines the substrate pocket.

This sequence belongs to the tRNA pseudouridine synthase TruA family. In terms of assembly, homodimer.

It carries out the reaction uridine(38/39/40) in tRNA = pseudouridine(38/39/40) in tRNA. Formation of pseudouridine at positions 38, 39 and 40 in the anticodon stem and loop of transfer RNAs. The protein is tRNA pseudouridine synthase A of Brucella abortus (strain 2308).